We begin with the raw amino-acid sequence, 437 residues long: Doublesex- and mab-3-related transcription factor A2 (437 aa).

A DNA-binding region (DM) is located at residues 49 to 96 (CARCRNHGVVSALKGHKRYCRWKDCMCAKCTLIAERQRVMAAQVALRR). Disordered regions lie at residues 163 to 254 (SVTP…ARQR) and 297 to 317 (DKSEETWSRDGALPSIQPSVS). Composition is skewed to low complexity over residues 179–201 (SESVSGSAPGASSPEARPGSGSE) and 223–235 (SPSSISPLGSESG). In terms of domain architecture, DMA spans 254 to 289 (RTPIDILTRVFPAQKRSVLELVLQGCGGDVVQAIEQ).

Belongs to the DMRT family.

The protein localises to the nucleus. In terms of biological role, may be involved in sexual development. The chain is Doublesex- and mab-3-related transcription factor A2 (dmrta2) from Xenopus tropicalis (Western clawed frog).